We begin with the raw amino-acid sequence, 612 residues long: PAN2-PAN3 deadenylation complex subunit PAN3 (612 aa).

The C3H1-type zinc-finger motif lies at 10-39 (WAKDTPCKNITIYGYCKYENDGCIFNHGKP). Positions 44 to 62 (SNTGGAAAGSAEDSAASGG) are enriched in low complexity. Residues 44–64 (SNTGGAAAGSAEDSAASGGVT) are disordered. 2 short sequence motifs (PABPC-interacting motif-2 (PAM-2)) span residues 84–104 (SVAI…IVSS) and 111–131 (TAFT…SANV). Positions 231 to 481 (QVFPSDGNLP…TIAEFTALFS (251 aa)) are pseudokinase domain. Residues R286, 336–343 (DYYPQSNS), and 389–390 (DK) each bind ATP. A coiled-coil region spans residues 482 to 520 (HKMLDIISSSQTYSEYIEQHLSRELENGRLFRLMCKLNF). The segment at 521 to 612 (IFGRMESSMD…IDSTFRSMTQ (92 aa)) is knob domain.

Belongs to the protein kinase superfamily. PAN3 family. As to quaternary structure, homodimer. Forms a heterotrimer with a catalytic subunit PAN2 to form the poly(A)-nuclease (PAN) deadenylation complex. Interacts (via PAM-2 motif) with poly(A)-binding protein PAB1 (via PABC domain), conferring substrate specificity of the enzyme complex.

It is found in the cytoplasm. Its function is as follows. Regulatory subunit of the poly(A)-nuclease (PAN) deadenylation complex, one of two cytoplasmic mRNA deadenylases involved in mRNA turnover. PAN specifically shortens poly(A) tails of RNA and the activity is stimulated by poly(A)-binding protein PAB1. PAN deadenylation is followed by rapid degradation of the shortened mRNA tails by the CCR4-NOT complex. Deadenylated mRNAs are then degraded by two alternative mechanisms, namely exosome-mediated 3'-5' exonucleolytic degradation, or deadenylation-dependent mRNA decaping and subsequent 5'-3' exonucleolytic degradation by XRN1. May also be involved in post-transcriptional maturation of mRNA poly(A) tails. PAN3 acts as a positive regulator for PAN activity, recruiting the catalytic subunit PAN2 to mRNA via its interaction with RNA and with PAB1. In Eremothecium gossypii (strain ATCC 10895 / CBS 109.51 / FGSC 9923 / NRRL Y-1056) (Yeast), this protein is PAN2-PAN3 deadenylation complex subunit PAN3.